The sequence spans 396 residues: Elongation factor Tu 1 (396 aa).

The tr-type G domain maps to 10-206 (KPHVNVGTIG…ALDSYIPLPE (197 aa)). Residues 19-26 (GHVDHGKT) form a G1 region. 19–26 (GHVDHGKT) contacts GTP. Thr-26 is a Mg(2+) binding site. Residues 60–64 (GITIN) form a G2 region. The tract at residues 81 to 84 (DCPG) is G3. Residues 81-85 (DCPGH) and 136-139 (NKCD) each bind GTP. Residues 136–139 (NKCD) form a G4 region. The segment at 174–176 (SAK) is G5.

This sequence belongs to the TRAFAC class translation factor GTPase superfamily. Classic translation factor GTPase family. EF-Tu/EF-1A subfamily. As to quaternary structure, monomer.

The protein localises to the cytoplasm. It carries out the reaction GTP + H2O = GDP + phosphate + H(+). GTP hydrolase that promotes the GTP-dependent binding of aminoacyl-tRNA to the A-site of ribosomes during protein biosynthesis. The chain is Elongation factor Tu 1 from Albidiferax ferrireducens (strain ATCC BAA-621 / DSM 15236 / T118) (Rhodoferax ferrireducens).